A 578-amino-acid polypeptide reads, in one-letter code: Membrane protein insertase YidC (578 aa).

Residues 3–23 (IQRSILIVALAVVSYLLVLQW) form a helical membrane-spanning segment. The segment at 34–71 (AASASMNTTQGLPDTPSAAGTSSDVPTAQSGAAGSEAA) is disordered. Polar residues predominate over residues 37-65 (ASMNTTQGLPDTPSAAGTSSDVPTAQSGA). 5 consecutive transmembrane segments (helical) span residues 361–381 (LELT…FWLL), 387–407 (LIGN…LAFF), 457–477 (LGGC…YWVL), 500–520 (PFFI…MLNP), and 535–555 (PIIF…YWVV).

This sequence belongs to the OXA1/ALB3/YidC family. Type 1 subfamily. Interacts with the Sec translocase complex via SecD. Specifically interacts with transmembrane segments of nascent integral membrane proteins during membrane integration.

It localises to the cell inner membrane. Required for the insertion and/or proper folding and/or complex formation of integral membrane proteins into the membrane. Involved in integration of membrane proteins that insert both dependently and independently of the Sec translocase complex, as well as at least some lipoproteins. Aids folding of multispanning membrane proteins. In Pseudomonas paraeruginosa (strain DSM 24068 / PA7) (Pseudomonas aeruginosa (strain PA7)), this protein is Membrane protein insertase YidC.